A 388-amino-acid polypeptide reads, in one-letter code: Quinolone resistance protein NorA (388 aa).

12 helical membrane-spanning segments follow: residues 5–25 (IFVL…VIPV), 42–62 (LLVA…GTLA), 69–89 (LIIC…AVGH), 99–119 (VIGG…IADI), 129–149 (FGYM…IGGF), 157–177 (MPFY…IVLI), 201–221 (WKVF…LSAF), 239–259 (DISI…IYFF), 269–289 (LTFI…LVFA), 293–313 (WSIM…RPAI), 331–351 (LNST…GALF), and 355–375 (IEAP…IVLI).

It belongs to the major facilitator superfamily. TCR/Tet family.

It localises to the cell membrane. Functionally, involved in quinolone resistance. May constitute a membrane-associated active efflux pump of hydrophilic quinolones. The polypeptide is Quinolone resistance protein NorA (norA) (Staphylococcus aureus (strain Mu50 / ATCC 700699)).